The primary structure comprises 151 residues: U1 small nuclear ribonucleoprotein C (151 aa).

A Matrin-type zinc finger spans residues 4–36 (YYCDYCDTYLTHDSPSVRKTHCTGRKHKDNVKF).

Belongs to the U1 small nuclear ribonucleoprotein C family. In terms of assembly, U1 snRNP is composed of the 7 core Sm proteins B/B', D1, D2, D3, E, F and G that assemble in a heptameric protein ring on the Sm site of the small nuclear RNA to form the core snRNP, and at least 3 U1 snRNP-specific proteins U1-70K, U1-A and U1-C. U1-C interacts with U1 snRNA and the 5' splice-site region of the pre-mRNA.

The protein resides in the nucleus. Its function is as follows. Component of the spliceosomal U1 snRNP, which is essential for recognition of the pre-mRNA 5' splice-site and the subsequent assembly of the spliceosome. U1-C is directly involved in initial 5' splice-site recognition for both constitutive and regulated alternative splicing. The interaction with the 5' splice-site seems to precede base-pairing between the pre-mRNA and the U1 snRNA. Stimulates commitment or early (E) complex formation by stabilizing the base pairing of the 5' end of the U1 snRNA and the 5' splice-site region. The polypeptide is U1 small nuclear ribonucleoprotein C (Anopheles darlingi (Mosquito)).